Reading from the N-terminus, the 327-residue chain is Phosphate acyltransferase (327 aa).

Belongs to the PlsX family. In terms of assembly, homodimer. Probably interacts with PlsY.

It is found in the cytoplasm. It catalyses the reaction a fatty acyl-[ACP] + phosphate = an acyl phosphate + holo-[ACP]. It participates in lipid metabolism; phospholipid metabolism. Catalyzes the reversible formation of acyl-phosphate (acyl-PO(4)) from acyl-[acyl-carrier-protein] (acyl-ACP). This enzyme utilizes acyl-ACP as fatty acyl donor, but not acyl-CoA. The protein is Phosphate acyltransferase of Mycoplasma mobile (strain ATCC 43663 / 163K / NCTC 11711) (Mesomycoplasma mobile).